A 357-amino-acid polypeptide reads, in one-letter code: Alternative oxidase, mitochondrial (357 aa).

A helical transmembrane segment spans residues 152–172 (LTRCIFLESIAGVPGAVASFI). Fe cation contacts are provided by Glu-159, Glu-198, and His-201. A helical membrane pass occupies residues 218–238 (IIYVGQGVFCNLFFLFYLANP). 3 residues coordinate Fe cation: Glu-249, Glu-304, and His-307. Positions 330-357 (IPDLKEPQPESGLKVTKPHGWEKEELKL) are disordered. Positions 348-357 (HGWEKEELKL) are enriched in basic and acidic residues.

Belongs to the alternative oxidase family. Requires Fe cation as cofactor.

The protein localises to the mitochondrion inner membrane. Catalyzes cyanide-resistant oxygen consumption. May increase respiration when the cytochrome respiratory pathway is restricted, or in response to low temperatures. This Scheffersomyces stipitis (strain ATCC 58785 / CBS 6054 / NBRC 10063 / NRRL Y-11545) (Yeast) protein is Alternative oxidase, mitochondrial (STO1).